Consider the following 482-residue polypeptide: Glutamyl-tRNA(Gln) amidotransferase subunit A (482 aa).

Active-site charge relay system residues include K75 and S150. The active-site Acyl-ester intermediate is S174.

The protein belongs to the amidase family. GatA subfamily. In terms of assembly, heterotrimer of A, B and C subunits.

The enzyme catalyses L-glutamyl-tRNA(Gln) + L-glutamine + ATP + H2O = L-glutaminyl-tRNA(Gln) + L-glutamate + ADP + phosphate + H(+). Its function is as follows. Allows the formation of correctly charged Gln-tRNA(Gln) through the transamidation of misacylated Glu-tRNA(Gln) in organisms which lack glutaminyl-tRNA synthetase. The reaction takes place in the presence of glutamine and ATP through an activated gamma-phospho-Glu-tRNA(Gln). This chain is Glutamyl-tRNA(Gln) amidotransferase subunit A, found in Cyanothece sp. (strain PCC 7425 / ATCC 29141).